Consider the following 96-residue polypeptide: Putative pterin-4-alpha-carbinolamine dehydratase (96 aa).

The protein belongs to the pterin-4-alpha-carbinolamine dehydratase family.

The catalysed reaction is (4aS,6R)-4a-hydroxy-L-erythro-5,6,7,8-tetrahydrobiopterin = (6R)-L-erythro-6,7-dihydrobiopterin + H2O. The protein is Putative pterin-4-alpha-carbinolamine dehydratase of Prochlorococcus marinus (strain MIT 9301).